A 237-amino-acid chain; its full sequence is Probable transcriptional regulatory protein PSHAa1370 (237 aa).

The protein belongs to the TACO1 family.

The protein resides in the cytoplasm. The chain is Probable transcriptional regulatory protein PSHAa1370 from Pseudoalteromonas translucida (strain TAC 125).